Consider the following 310-residue polypeptide: Nodulation protein D 2 (310 aa).

In terms of domain architecture, HTH lysR-type spans leucine 6 to threonine 63. Residues leucine 23 to alanine 42 constitute a DNA-binding region (H-T-H motif).

Belongs to the LysR transcriptional regulatory family.

Functionally, nodD regulates the expression of the nodABCFE genes which encode other nodulation proteins. NodD is also a negative regulator of its own expression. Binds flavonoids as inducers. The protein is Nodulation protein D 2 (nodD2) of Rhizobium meliloti (strain 1021) (Ensifer meliloti).